The sequence spans 299 residues: Transcription termination/antitermination protein NusG (299 aa).

The disordered stretch occupies residues 30 to 96 (DPDEAELADA…APVEPAEPVD (67 aa)). 2 tandem repeats follow at residues 46-49 (EEAA) and 70-73 (EEAA). The segment at 46-87 (EEAALHVESDEDEDEADVEVDAAVEEAADDAEVAEEEAEEAA) is 4 X 4 AA repeats of E-E-A-A. Acidic residues predominate over residues 54–87 (SDEDEDEADVEVDAAVEEAADDAEVAEEEAEEAA). The 3; approximate repeat unit spans residues 80–83 (EEEA). Residues 84–87 (EEAA) form repeat 4. The region spanning 248 to 276 (VGDSVTVTDGPFATLQATINEINPDSKKV) is the KOW domain.

This sequence belongs to the NusG family. Post-translationally, the N-terminus is blocked.

Its function is as follows. Participates in transcription elongation, termination and antitermination. The polypeptide is Transcription termination/antitermination protein NusG (Streptomyces virginiae (Streptomyces cinnamonensis)).